A 463-amino-acid chain; its full sequence is Argininosuccinate lyase (463 aa).

It belongs to the lyase 1 family. Argininosuccinate lyase subfamily.

It is found in the cytoplasm. It carries out the reaction 2-(N(omega)-L-arginino)succinate = fumarate + L-arginine. Its pathway is amino-acid biosynthesis; L-arginine biosynthesis; L-arginine from L-ornithine and carbamoyl phosphate: step 3/3. The sequence is that of Argininosuccinate lyase from Thermosynechococcus vestitus (strain NIES-2133 / IAM M-273 / BP-1).